The primary structure comprises 480 residues: Adenosylhomocysteinase (480 aa).

Substrate-binding residues include T63, D142, and E203. Residue 204-206 coordinates NAD(+); that stretch reads TTT. Substrate is bound by residues K233 and D237. NAD(+) is bound by residues N238, 267 to 272, E290, N325, 346 to 348, and N394; these read GYGDVG and IGH.

Belongs to the adenosylhomocysteinase family. The cofactor is NAD(+).

It localises to the cytoplasm. The enzyme catalyses S-adenosyl-L-homocysteine + H2O = L-homocysteine + adenosine. It participates in amino-acid biosynthesis; L-homocysteine biosynthesis; L-homocysteine from S-adenosyl-L-homocysteine: step 1/1. Its function is as follows. May play a key role in the regulation of the intracellular concentration of adenosylhomocysteine. The polypeptide is Adenosylhomocysteinase (Xanthomonas campestris pv. campestris (strain 8004)).